Reading from the N-terminus, the 208-residue chain is Large ribosomal subunit protein uL3 (208 aa).

Residue Q149 is modified to N5-methylglutamine.

It belongs to the universal ribosomal protein uL3 family. Part of the 50S ribosomal subunit. Forms a cluster with proteins L14 and L19. In terms of processing, methylated by PrmB.

In terms of biological role, one of the primary rRNA binding proteins, it binds directly near the 3'-end of the 23S rRNA, where it nucleates assembly of the 50S subunit. This Haemophilus ducreyi (strain 35000HP / ATCC 700724) protein is Large ribosomal subunit protein uL3.